Here is a 158-residue protein sequence, read N- to C-terminus: Protein hunchback (158 aa).

Basic residues predominate over residues 18–34 (HNHHHHHHHGHHQHQQR). 2 disordered regions span residues 18 to 96 (HNHH…TTTA) and 118 to 158 (LTPP…KYMA). Over residues 41-50 (ASSPHQSPLP) the composition is skewed to polar residues. Positions 52 to 65 (LQLEQYLKQQQQQP) are enriched in low complexity. The span at 139 to 158 (EPEKEHDLMSNSSEDMKYMA) shows a compositional bias: basic and acidic residues.

This sequence belongs to the hunchback C2H2-type zinc-finger protein family.

The protein resides in the nucleus. Functionally, gap class segmentation protein that controls development of head structures. The chain is Protein hunchback (hb) from Drosophila mimica (Fruit fly).